The primary structure comprises 119 residues: Integration host factor subunit alpha (119 aa).

Positions 96–119 (INGQQGSGKMNGEASHEQLSAEPE) are disordered.

Belongs to the bacterial histone-like protein family. Heterodimer of an alpha and a beta chain.

Its function is as follows. This protein is one of the two subunits of integration host factor, a specific DNA-binding protein that functions in genetic recombination as well as in transcriptional and translational control. This Bradyrhizobium sp. (strain BTAi1 / ATCC BAA-1182) protein is Integration host factor subunit alpha.